We begin with the raw amino-acid sequence, 254 residues long: Undecaprenyl-diphosphatase 3 (254 aa).

Transmembrane regions (helical) follow at residues 8 to 28 (TEFLPVSSTGHMILTGHLIGF), 33 to 53 (AKVFEVVIQLGSILAVVVIFW), 74 to 94 (LHIIIGMIPAGVLGVLFHSAI), 97 to 117 (VLFGPGPVVISLVAGGILMIV), 133 to 153 (ITYKQAFTIGMFQCLALWPGF), 174 to 194 (AEYTFILAVPMMVAASGLDLI), 207 to 227 (LFATGFITAFVVAMLAIVSFL), and 233 to 253 (VKLTPFAYYRFILAAVFYFFI).

The protein belongs to the UppP family.

The protein resides in the cell membrane. It catalyses the reaction di-trans,octa-cis-undecaprenyl diphosphate + H2O = di-trans,octa-cis-undecaprenyl phosphate + phosphate + H(+). Functionally, catalyzes the dephosphorylation of undecaprenyl diphosphate (UPP). Confers resistance to bacitracin. The chain is Undecaprenyl-diphosphatase 3 from Bacillus thuringiensis (strain Al Hakam).